The chain runs to 199 residues: ATP-dependent Clp protease proteolytic subunit (199 aa).

Catalysis depends on Ser97, which acts as the Nucleophile. Residue His122 is part of the active site.

It belongs to the peptidase S14 family. As to quaternary structure, fourteen ClpP subunits assemble into 2 heptameric rings which stack back to back to give a disk-like structure with a central cavity, resembling the structure of eukaryotic proteasomes.

Its subcellular location is the cytoplasm. The enzyme catalyses Hydrolysis of proteins to small peptides in the presence of ATP and magnesium. alpha-casein is the usual test substrate. In the absence of ATP, only oligopeptides shorter than five residues are hydrolyzed (such as succinyl-Leu-Tyr-|-NHMec, and Leu-Tyr-Leu-|-Tyr-Trp, in which cleavage of the -Tyr-|-Leu- and -Tyr-|-Trp bonds also occurs).. In terms of biological role, cleaves peptides in various proteins in a process that requires ATP hydrolysis. Has a chymotrypsin-like activity. Plays a major role in the degradation of misfolded proteins. The sequence is that of ATP-dependent Clp protease proteolytic subunit from Geotalea daltonii (strain DSM 22248 / JCM 15807 / FRC-32) (Geobacter daltonii).